Here is a 1062-residue protein sequence, read N- to C-terminus: Histone H3-lysine(4) N-trimethyltransferase ATX1 (1062 aa).

Positions 159–184 are disordered; the sequence is NAFSGNKQNGSSRRKGSSSKNQDKAT. Residues 301 to 365 enclose the PWWP domain; that stretch reads PGDIVWAKLA…VKQAISFIKG (65 aa). The segment at 401–424 is disordered; that stretch reads QLQKGADSVDSDMANSTEEGNSGG. An FYR N-terminal domain is found at 441 to 500; that stretch reads DFRHIIGDLLIINLGKVVTDSQFFKDENHIWPEGYTAMRKFTSLTDHSASALYKMEVLRD. In terms of domain architecture, FYR C-terminal spans 504–586; the sequence is KTHPLFIVTA…RPSSHVSMCK (83 aa). The Phorbol-ester/DAG-type zinc-finger motif lies at 591–647; the sequence is RHQNQPTGYRPVRVDWKDLDKCNVCHMDEEYENNLFLQCDKCRMMVHAKCYGELEPC. The segment at 599-1062 is interaction with PIP5; the sequence is YRPVRVDWKD…RCDLIDWTAE (464 aa). The segment at 609–660 adopts a PHD-type 1 zinc-finger fold; it reads LDKCNVCHMDEEYENNLFLQCDKCRMMVHAKCYGELEPCDGALWLCNLCRPG. The C2HC pre-PHD-type zinc finger occupies 665–698; the sequence is PPRCCLCPVVGGAMKPTTDGRWAHLACAIWIPET. The PHD-type 2 zinc-finger motif lies at 722-785; that stretch reads LMCTICGVSY…RMLSFCKRHR (64 aa). In terms of domain architecture, SET spans 898–1016; the sequence is KRLAFGKSGI…KWEELTYDYR (119 aa). Position 908 (His908) interacts with S-adenosyl-L-methionine. Ser947 is a glycosylation site (O-linked (GlcNAc) serine). S-adenosyl-L-methionine-binding positions include Tyr954 and 977–978; that span reads NH. Positions 980, 1026, 1028, and 1033 each coordinate Zn(2+). The Post-SET domain maps to 1022–1038; it reads ERLSCSCGFPGCRGVVN.

This sequence belongs to the class V-like SAM-binding methyltransferase superfamily. Histone-lysine methyltransferase family. TRX/MLL subfamily. In terms of assembly, interacts with PIP5. Interacts with WDR5A. Binds to CLF in the nucleus. Interacts with NRPB1 CTD domain, especially when NRPB1 is phosphorylated on 'Ser-5' of the heptapeptide repeat. Component of a nuclear protein complex containing at least TATA binding proteins (TBPs, e.g. TBP1 and TBP2) and ATX1. Associates with ULT1 for trimethylating 'Lys-4' on histone H3 (H3K4me3) at flower MADS box gene loci. Interacts with SEC. As to quaternary structure, interacts with A4/EF1A in the cytoplasm on the nuclear periphery. Post-translationally, activated via O-glycosylation by SEC; this modification triggers FLC locus H3K4me3 histone modification, thus preventing premature flowering. Strongly expressed in cotyledons, but weak levels in the first true leaves, except at the hydothodes. Ubiquitous with higher levels in dividing tissues, including inflorescence meristem and flower primordia. Expressed also in leaves (especially at hydathodes), in growing inflorescence stems and in the mature flowers. In terms of tissue distribution, strongly expressed in young seedlings.

It is found in the nucleus. It localises to the cytoplasm. Its subcellular location is the perinuclear region. It carries out the reaction L-lysyl(4)-[histone H3] + 3 S-adenosyl-L-methionine = N(6),N(6),N(6)-trimethyl-L-lysyl(4)-[histone H3] + 3 S-adenosyl-L-homocysteine + 3 H(+). It catalyses the reaction L-lysyl-[protein] + 3 S-adenosyl-L-methionine = N(6),N(6),N(6)-trimethyl-L-lysyl-[protein] + 3 S-adenosyl-L-homocysteine + 3 H(+). In terms of biological role, binds to the promoter and regulates the transcription of target genes, maintaining them in an active state; at promoters, required for TATA binding proteins (TBPs, e.g. TBP1 and TBP2) and RNA polymerase II (Pol II) recruitment, and, in a subsequent event, is recruited by a phosphorylated form of Pol II to the +300-bp region of transcribed sequences to trimethylates nucleosomes. Histone trimethyltransferase that trimethylates 'Lys-4' of histone H3 (H3K4me3); H3 'Lys-4' methylation represents a specific tag for epigenetic transcriptional activation and is required for efficient elongation of transcription but not for transcription initiation. Methylates only a limited fraction of nucleosomes of target genes (e.g. FLC, NAP, XTH33 and WRKY70). Necessary for WDR5A occupancy at WRKY70 and LTP7 genes. Required to maintain the active state of class A (AP1 and AP2), class B (PI and AP3) and class C (AG, AGAMOUS) floral homeotic genes at early stages of flower development. Together with CLF, modulates AG nucleosome methylation statement. Involved in epigenetic regulation (e.g. H3K4me3) of the floral repressors FLC, FT and SOC1 to prevent the transition from vegetative to reproductive development, independently of the photoperiod; binds the active FLC locus before flowering, but this interaction is released upon the transition to flowering. Regulates floral organ identity and flowering transition. Functions as a receptor for the lipid messenger phosphatidylinositol 5-phosphate (PI5P), which negatively regulates its transcriptional activation activity. Exhibits histone methylase activity and subsequent transcriptional regulation on WRKY70 gene, and, to a lower extent on secondary defense-response targets salicylic acid (SA)-responsive gene PR1 and jasmonic acid (JA)-responsive gene THI2.1. Involved in response to dehydration stress-response in both abscisic acid (ABA)-dependent and ABA-independent pathways; this includes specific genes (e.g. COR15A, ADH1, CBF4, RD29A, RD29B, RD26, ABF3, NCED3 and ABA3) epigenetic regulation (e.g. H3K4me3 and Pol II recruitment) to promote their transcription and influence ABA production. Implicated in stomatal closure regulation. Indirect repressor of XTH genes (XTH33). Necessary for the phosphorylation of Pol II NRPB1 (e.g. Ser5P and Ser2P) at the promoters of target genes, thus regulating both early and late stages of transcription. Controls root growth and architecture by regulating the timing of root development, stem cell niche maintenance (e.g. quiescent center (QC)), and cell patterning during primary and lateral root development. Modulates cell cycle duration, cell production, and the transition from cell proliferation in the root apical meristem (RAM) to cell elongation. Functionally, trimethylates A4/EF1A post-translationally at Lys-396. Required for actin cytoskeleton organization. This Arabidopsis thaliana (Mouse-ear cress) protein is Histone H3-lysine(4) N-trimethyltransferase ATX1.